Consider the following 110-residue polypeptide: MTKADIVENVYQKIGFSKKEASELVELVFDTLKTVLQDGEKVKISGFGNFVVRGKNERIGRNPQTGEQIKISARRVLTFRPSQVLKAMLNGEEYAHLKDEDDDDDYDDNE.

Belongs to the bacterial histone-like protein family. Heterodimer of an alpha and a beta chain.

Its function is as follows. This protein is one of the two subunits of integration host factor, a specific DNA-binding protein that functions in genetic recombination as well as in transcriptional and translational control. The sequence is that of Integration host factor subunit alpha from Bdellovibrio bacteriovorus (strain ATCC 15356 / DSM 50701 / NCIMB 9529 / HD100).